The primary structure comprises 188 residues: Trafficking protein particle complex subunit 5 (188 aa).

Phosphoserine is present on Ser-10.

Belongs to the TRAPP small subunits family. BET3 subfamily. As to quaternary structure, component of the multisubunit TRAPP (transport protein particle) complex, which includes at least TRAPPC2, TRAPPC2L, TRAPPC3, TRAPPC3L, TRAPPC4, TRAPPC5, TRAPPC8, TRAPPC9, TRAPPC10, TRAPPC11 and TRAPPC12.

It is found in the golgi apparatus. It localises to the cis-Golgi network. The protein localises to the endoplasmic reticulum. In terms of biological role, may play a role in vesicular transport from endoplasmic reticulum to Golgi. This Mus musculus (Mouse) protein is Trafficking protein particle complex subunit 5 (Trappc5).